Reading from the N-terminus, the 961-residue chain is Rho guanine nucleotide exchange factor 2 (961 aa).

The Phorbol-ester/DAG-type zinc-finger motif lies at 12 to 59; sequence GHLFTTISVSGMTMCYACNKSITAKEALICPTCNVTIHNRCKDTLANC. Serine 82, serine 95, serine 102, serine 106, serine 110, serine 124, serine 136, serine 145, serine 147, and serine 150 each carry phosphoserine. The segment at 104 to 134 is interaction with DYNLT1; the sequence is RQSLLGSRRGRSPLSLAKSVSTTNIAGHFND. Positions 209-406 constitute a DH domain; it reads KQQDVIYELI…KELLSNVDQD (198 aa). N6-acetyllysine is present on lysine 327. The region spanning 446-545 is the PH domain; the sequence is KLIHDGCLLW…WIRVIQQSVR (100 aa). Residues 561–588 adopt a coiled-coil conformation; it reads EAYLRRIKMELQQKDRALVELLQEKVGL. Residues serine 619 and serine 622 each carry the phosphoserine modification. Threonine 653 is subject to Phosphothreonine; by MAPK1 or MAPK3. Positions 659–679 are disordered; it reads LPVETDSGGNTSPGVTANGEA. A phosphoserine mark is found at serine 665, serine 670, serine 685, and serine 756. Positions 742–761 are enriched in basic and acidic residues; sequence PEGPERREKLTRANSRDGEA. Positions 742–770 are disordered; it reads PEGPERREKLTRANSRDGEAGRAGAAPVA. Positions 772-841 form a coiled coil; the sequence is EKQATELALL…RQLAALGHTE (70 aa). Position 860 is a phosphoserine; by PAK1 and AURKA (serine 860). A disordered region spans residues 867 to 961; sequence LYLSFTPPQP…RDGEPVASES (95 aa). A Phosphotyrosine modification is found at tyrosine 868. Position 870 is a phosphoserine; by PAK4 (serine 870). The segment covering 894–913 has biased composition (basic and acidic residues); sequence RPFEDRERQELGSPDERLQD. Serine 906, serine 914, and serine 915 each carry phosphoserine. The segment covering 915–925 has biased composition (acidic residues); sequence SDPDTGSEEEG. Threonine 919 is subject to Phosphothreonine. A phosphoserine mark is found at serine 921, serine 927, serine 928, and serine 931. Phosphoserine; by CDK1 is present on serine 935.

In terms of assembly, found in a complex composed at least of ARHGEF2, NOD2 and RIPK2. Interacts with RIPK2; the interaction mediates tyrosine phosphorylation of RIPK2 by Src kinase CSK. Interacts with RIPK1 and RIPK3. Interacts with YWHAZ/14-3-3 zeta; when phosphorylated at Ser-860. Interacts with the kinases PAK4, AURKA and MAPK1. Interacts with RHOA and RAC1. Interacts with NOD1. Interacts (via the N- terminal zinc finger) with CAPN6 (via domain II). Interacts with DYNLT1. Post-translationally, phosphorylation of Ser-860 by PAK1 induces binding to protein YWHAZ, promoting its relocation to microtubules and the inhibition of its activity. Phosphorylated by AURKA and CDK1 during mitosis, which negatively regulates its activity. Phosphorylation by MAPK1 or MAPK3 increases nucleotide exchange activity. Phosphorylation by PAK4 releases GEF-H1 from the microtubules. Phosphorylated on serine, threonine and tyrosine residues in a RIPK2-dependent manner.

It is found in the cytoplasm. Its subcellular location is the cytoskeleton. The protein resides in the cell junction. It localises to the tight junction. The protein localises to the golgi apparatus. It is found in the spindle. Its subcellular location is the cytoplasmic vesicle. In terms of biological role, activates Rho-GTPases by promoting the exchange of GDP for GTP. May be involved in epithelial barrier permeability, cell motility and polarization, dendritic spine morphology, antigen presentation, leukemic cell differentiation, cell cycle regulation, innate immune response, and cancer. Binds Rac-GTPases, but does not seem to promote nucleotide exchange activity toward Rac-GTPases. May stimulate instead the cortical activity of Rac. Inactive toward CDC42, TC10, or Ras-GTPases. Forms an intracellular sensing system along with NOD1 for the detection of microbial effectors during cell invasion by pathogens. Involved in innate immune signaling transduction pathway promoting cytokine IL6/interleukin-6 and TNF-alpha secretion in macrophage upon stimulation by bacterial peptidoglycans; acts as a signaling intermediate between NOD2 receptor and RIPK2 kinase. Contributes to the tyrosine phosphorylation of RIPK2 through Src tyrosine kinase leading to NF-kappaB activation by NOD2. Overexpression activates Rho-, but not Rac-GTPases, and increases paracellular permeability. Involved in neuronal progenitor cell division and differentiation. Involved in the migration of precerebellar neurons. The sequence is that of Rho guanine nucleotide exchange factor 2 (ARHGEF2) from Sus scrofa (Pig).